Consider the following 231-residue polypeptide: S-norcoclaurine synthase 2 (231 aa).

107-109 (YKE) provides a ligand contact to dopamine. The Proton donor role is filled by lysine 121. Position 140 (aspartate 140) interacts with (4-hydroxyphenyl)acetaldehyde. A helical membrane pass occupies residues 210–230 (LLLCLIICLVIAGGMFVAGVP).

The protein belongs to the BetVI family. As to expression, expressed in roots, stems and leaves. Detected in flower buds and germinating seeds. Low expression in carpels. Restricted to sieve elements of the phloem adjacent or proximal to laticifers.

It is found in the endoplasmic reticulum membrane. It localises to the vacuole membrane. The catalysed reaction is (4-hydroxyphenyl)acetaldehyde + dopamine = (S)-norcoclaurine + H2O. Its pathway is alkaloid biosynthesis; (S)-reticuline biosynthesis. Its activity is regulated as follows. Activity doubles within 5 hours of elicitor treatment and continues to increase for at least 80 hours. Involved in the biosynthesis of (S)-coclaurine, the common precursor of all benzylisoquinoline alkaloids such as morphine, sanguinarine, codeine or papaverine. Condenses dopamine and 4-hydroxyphenylacetaldehyde. This chain is S-norcoclaurine synthase 2, found in Papaver somniferum (Opium poppy).